The following is a 42-amino-acid chain: Alpha-conotoxin VnIB (42 aa).

A propeptide spanning residues Ala1–Arg22 is cleaved from the precursor. 2 cysteine pairs are disulfide-bonded: Cys25/Cys31 and Cys26/Cys38. Gly39 is modified (glycine amide).

This sequence belongs to the conotoxin A superfamily. Expressed by the venom duct.

It localises to the secreted. Its function is as follows. Alpha-conotoxins act on postsynaptic membranes, they bind to the nicotinic acetylcholine receptors (nAChR) and thus inhibit them. This toxin potently and selectively inhibits human and rat alpha-6-beta-4/CHRNA6-CHRNB4 nAChR (IC(50)=12 nM on rat nAChR). It exhibits rapid binding and unbinding at this receptor. It also shows activity on rat alpha-6-beta-4/CHRNA6-CHRNB4 (IC(50)=12 nM), human alpha-6/alpha-3-beta-4 (CHRNA6/CHRNA3-CHRNB4) (IC(50)=5.3 nM), rat alpha-6/alpha-3-beta-4 (CHRNA6/CHRNA3-CHRNB4) (IC(50)=18 nM), rat alpha-3-beta-4/CHRNA3-CHRNB4 (IC(50)=320 nM), and rat alpha-6/alpha-3-beta-2-beta-3 (CHRNA6/CHRNA3-CHRNB2-CHRNB3) (IC(50)=4 uM). In Conus ventricosus (Mediterranean cone), this protein is Alpha-conotoxin VnIB.